The following is a 108-amino-acid chain: UPF0145 protein Fnod_0426 (108 aa).

It belongs to the UPF0145 family.

In Fervidobacterium nodosum (strain ATCC 35602 / DSM 5306 / Rt17-B1), this protein is UPF0145 protein Fnod_0426.